Consider the following 494-residue polypeptide: UDP-N-acetylmuramate--L-alanine ligase (494 aa).

134–140 (GSHGKTT) serves as a coordination point for ATP.

Belongs to the MurCDEF family.

The protein localises to the cytoplasm. It carries out the reaction UDP-N-acetyl-alpha-D-muramate + L-alanine + ATP = UDP-N-acetyl-alpha-D-muramoyl-L-alanine + ADP + phosphate + H(+). The protein operates within cell wall biogenesis; peptidoglycan biosynthesis. Functionally, cell wall formation. The protein is UDP-N-acetylmuramate--L-alanine ligase of Prochlorococcus marinus (strain NATL1A).